We begin with the raw amino-acid sequence, 2493 residues long: MAKQRQTTKSSKRYRYSSFKARIDDLKIEPARNLEKRVHDYVESSHFLASFDQWKEINLSAKFTEFAAEIEHDVQTLPQILYHDKKIFNSLVSFINFHDEFSLQPLLDLLAQFCHDLGPDFLKFYEEAIKTLINLLDAAIEFESSNVFEWGFNCLAYIFKYLSKFLVKKLVLTCDLLIPLLSHSKEYLSRFSAEALSFLVRKCPVSNLREFVRSVFEKLEGDDEQTNLYEGLLILFTESMTSTQETLHSKAKAIMSVLLHEALTKSSPERSVSLLSDIWMNISKYASIESLLPVYEVMYQDFNDSLDATNIDRILKVLTTIVFSESGRKIPDWNKITILIERIMSQSENCASLSQDKVAFLFALFIRNSDVKTLTLFHQKLFNYALTNISDCFLEFFQFALRLSYERVFSFNGLKFLQLFLKKNWQSQGKKIALFFLEVDDKPELQKVREVNFPEEFILSIRDFFVTAEINDSNDLFEIYWRAIIFKYSKLQNTEIIIPLLERIFSTFASPDNFTKDMVGTLLKIYRKEDDASGNNLLKTILDNYENYKESLNFLRGWNKLVSNLHPSESLKGLMSHYPSLLLSLTDNFMLPDGKIRYETLELMKTLMILQGMQVPDLLSSCMVIEEIPLTLQNARDLTIRIKNVGAEFGKTKTDKLVSSFFLKYLFGLLTVRFSPVWTGVFDTLPNVYTKDEALVWKLVLSFIKLPDENQNLDYYQPLLEDGANKVLWDSSVVRLRDTIDTFSHIWSKYSTQNTSIISTTIERRGNTTYPILIRNQALKVMLSIPQVAENHFVDIAPFVYNDFKTYKDEEDMENERVITGSWTEVDRNVFLKTLSKFKNIKNVYSATELHDHLMVLLGSRNTDVQKLALDALLAYKNPTLNKYRDNLKNLLDDTLFKDEITTFLTENGSQSIKAEDEKVVMPYVLRIFFGRAQVPPTSGQKRSRKIAVISVLPNFKKPYINDFLSLASERLDYNYFFGNSHQINSSKATLKTIRRMTGFVNIVNSTLSVLRTNFPLHTNSVLQPLIYSIAMAYYVLDTESTEEVHLRKMASNLRQQGLKCLSSVFEFVGNTFDWSTSMEDIYAVVVKPRISHFSDENLQQPSSLLRLFLYWAHNPSLYQFLYYDEFATATALMDTISNQHVKEAVIGPIIEAADSIIRNPVNDDHYVDLVTLICTSCLKILPSLYVKLSDSNSISTFLNLLVSITEMGFIQDDHVRSRLISSLISILKGKLKKLQENDTQKILKILKLIVFNYNCSWSDIEELYTTISSLFKTFDERNLRVSLTELFIELGRKVPELESISKLVADLNSYSSSRMHEYDFPRILSTFKGLIEDGYKSYSELEWLPLLFTFLHFINNKEELALRTNASHAIMKFIDFINEKPNLNEASKSISMLKDILLPNIRIGLRDSLEEVQSEYVSVLSYMVKNTKYFTDFEDMAILLYNGDEEADFFTNVNHIQLHRRQRAIKRLGEHAHQLKDNSISHYLIPMIEHYVFSDDERYRNIGNETQIAIGGLAQHMSWNQYKALLRRYISMLKTKPNQMKQAVQLIVQLSVPLRETLRIVRDGAESKLTLSKFPSNLDEPSNFIKQELYPTLSKILGTRDDETIIERMPIAEALVNIVLGLTNDDITNFLPSILTNICQVLRSKSEELRDAVRVTLGKISIILGAEYLVFVIKELMATLKRGSQIHVLSYTVHYILKSMHGVLKHSDLDTSSSMIVKIIMENIFGFAGEEKDSENYHTKVKEIKSNKSYDAGEILASNISLTEFGTLLSPVKALLMVRINLRNQNKLSELLRRYLLGLNHNSDSESESILKFCHQLFQESEMSNSPQIPKKKVKDQVDEKEDFFLVNLESKSYTINSNSLLLNSTLQKFALDLLRNVITRHRSFLTVSHLEGFIPFLRDSLLSENEGVVISTLRILITLIRLDFSDESSEIFKNCARKVLNIIKVSPSTSSELCQMGLKFLSAFIRHTDSTLKDTALSYVLGRVLPDLNEPSRQGLAFNFLKALVSKHIMLPELYDIADTTREIMVTNHSKEIRDVSRSVYYQFLMEYDQSKGRLEKQFKFMVDNLQYPTESGRQSVMELINLIITKANPALLSKLSSSFFLALVNVSFNDDAPRCREMASVLISTMLPKLENKDLEIVEKYIAAWLKQVDNASFLNLGLRTYKVYLKSIGFEHTIELDELAIKRIRYILSDTSVGSEHQWDLVYSALNTFSSYMEATESVYKHGFKDIWDGIITCLLYPHSWVRQSAANLVHQLIANKDKLEISLTNLEIQTIATRILHQLGAPSIPENLANVSIKTLVNISILWKEQRTPFIMDVSKQTGEDLKYTTAIDYMVTRIGGIIRSDEHRMDSFMSKKACIQLLALLVQVLDEDEVIAEGEKILLPLYGYLETYYSRAVDEEQEELRTLSNECLKILEDKLQVSDFTKIYTAVKQTVLERRKERRSKRAILAVNAPQISADKKLRKHARSREKRKHEKDENGYYQRRNKRKRA.

16 HEAT repeats span residues Asn-227–Thr-264, Glu-495–Ala-532, Ser-576–Met-613, Tyr-845–Asn-882, Thr-1176–Asp-1214, Val-1216–Phe-1252, Leu-1342–Glu-1380, Met-1393–Tyr-1430, Ser-1480–Trp-1520, Gln-1522–Thr-1558, Gln-1588–Asn-1625, Asn-1630–Ala-1667, Ser-1890–Ser-1927, Ser-1953–Glu-1992, Glu-2120–Phe-2157, and Lys-2358–Arg-2397. Residues Gln-2457–Ala-2493 form a disordered region. The segment covering Lys-2463–His-2476 has biased composition (basic residues).

This sequence belongs to the UTP20 family. In terms of assembly, interacts with snoRNA U3. Interacts with MPP10. Component of the ribosomal small subunit (SSU) processome composed of at least 40 protein subunits and snoRNA U3.

The protein resides in the cytoplasm. The protein localises to the nucleus. It localises to the nucleolus. Involved in nucleolar processing of pre-18S ribosomal RNA and ribosome assembly. This chain is U3 small nucleolar RNA-associated protein 20 (UTP20), found in Saccharomyces cerevisiae (strain ATCC 204508 / S288c) (Baker's yeast).